We begin with the raw amino-acid sequence, 412 residues long: Aspartate kinase Ask_LysC (412 aa).

Residues 265–332 enclose the ACT domain; the sequence is LTIRGVPDTP…QGIAAEMGAR (68 aa).

Belongs to the aspartokinase family.

The protein localises to the cytoplasm. It catalyses the reaction L-aspartate + ATP = 4-phospho-L-aspartate + ADP. The protein operates within amino-acid biosynthesis; L-lysine biosynthesis via DAP pathway; (S)-tetrahydrodipicolinate from L-aspartate: step 1/4. Its pathway is amino-acid biosynthesis; L-methionine biosynthesis via de novo pathway; L-homoserine from L-aspartate: step 1/3. It participates in amino-acid biosynthesis; L-threonine biosynthesis; L-threonine from L-aspartate: step 1/5. Allosterically and strongly feedback inhibited by tryptophan. Addition of lysine alone slightly enhances activity. The simultaneous addition of lysine and tryptophan leads to very strong feedback inhibition of the enzyme. The feedback control by tryptophan is reduced in the presence of the compatible solutes hydroxyectoine or ectoine. In terms of biological role, involved in the biosynthesis of L-aspartate-beta-semialdehyde which is a central intermediate in the biosynthesis of different amino acids (L-lysine, L-methionine, L-threonine). Catalyzes the phosphorylation of the beta-carboxyl group of L-aspartate to yield 4-phospho-L-aspartate. This Stutzerimonas stutzeri (strain A1501) (Pseudomonas stutzeri) protein is Aspartate kinase Ask_LysC (lysC).